Here is a 347-residue protein sequence, read N- to C-terminus: NADH-ubiquinone oxidoreductase chain 2 (347 aa).

The next 10 membrane-spanning stretches (helical) occupy residues 3 to 23 (PLALSLILTTLLAGTLITMMS), 25 to 45 (HWLTAWMGLEMNMLTMIPILM), 59 to 79 (YFMTQATASMMLMMALTINLM), 93 to 115 (VASNVALMALMTKLGSAPFHFWV), 150 to 170 (NTNLIYLSGLLSILIGGWGGL), 178 to 198 (ILAYSSISHMGWMLIILPFNP), 200 to 220 (LTLLNLAIYILLTLSIFMILA), 240 to 260 (MTIMLMTTLLSLGGLPPLSGF), 274 to 294 (NSIIMPLTMAIMTLLNMYFYM), and 326 to 346 (LPTLITLSNMLLPLTPMISML).

This sequence belongs to the complex I subunit 2 family. As to quaternary structure, core subunit of respiratory chain NADH dehydrogenase (Complex I) which is composed of 45 different subunits. Interacts with TMEM242.

The protein localises to the mitochondrion inner membrane. The catalysed reaction is a ubiquinone + NADH + 5 H(+)(in) = a ubiquinol + NAD(+) + 4 H(+)(out). In terms of biological role, core subunit of the mitochondrial membrane respiratory chain NADH dehydrogenase (Complex I) which catalyzes electron transfer from NADH through the respiratory chain, using ubiquinone as an electron acceptor. Essential for the catalytic activity and assembly of complex I. The polypeptide is NADH-ubiquinone oxidoreductase chain 2 (Mammuthus primigenius (Siberian woolly mammoth)).